The chain runs to 1705 residues: Alpha-protein kinase 3 (1705 aa).

Residues 1-10 are compositionally biased toward low complexity; that stretch reads MGSRRAPSRG. Positions 1-33 are disordered; it reads MGSRRAPSRGWGAGGRSGAGGDGEDDGPVWIPS. The span at 11–21 shows a compositional bias: gly residues; the sequence is WGAGGRSGAGG. The 92-residue stretch at 77 to 168 folds into the Ig-like 1 domain; that stretch reads PLFETTLKSR…GIVSCSGVLE (92 aa). The segment covering 211-221 has biased composition (basic and acidic residues); it reads DTLRKLSPDRF. 5 disordered regions span residues 211–244, 308–749, 792–845, 1082–1145, and 1173–1226; these read DTLR…EPEG, LKEE…GPRA, GPLS…ERPG, GLAS…KFPG, and RAAG…MLEV. S228 carries the phosphoserine modification. Over residues 308–342 the composition is skewed to basic and acidic residues; the sequence is LKEESGAKKKKKDEESKQGLRKPELEKAAQSRRSS. Low complexity predominate over residues 370–382; sequence PRGRAARGPGSSG. A compositionally biased stretch (polar residues) spans 495 to 504; sequence DSKPISSLSQ. The segment covering 557 to 579 has biased composition (low complexity); it reads TTTAPTMSASSSSDVASIGVSTS. Residues 598 to 609 show a composition bias toward polar residues; sequence TSANQRTGSKKN. The span at 647-657 shows a compositional bias: basic and acidic residues; it reads ESKRPQSDRSA. The span at 666–676 shows a compositional bias: polar residues; it reads RAETQLETTQA. The segment covering 679–700 has biased composition (basic and acidic residues); that stretch reads KIQEDRKAQADKGTQEDRRMQG. Polar residues predominate over residues 708-729; the sequence is KGTQSEGSAPTAMEGQSEQEVA. Residues 736–745 show a composition bias toward pro residues; that stretch reads SRTPKLPPTA. Over residues 829–844 the composition is skewed to basic and acidic residues; it reads AKQEDSPFQCPKEERP. Residues 1120-1131 are compositionally biased toward low complexity; sequence GQAAPGQGPSAE. Phosphoserine is present on S1222. In terms of domain architecture, Ig-like 2 spans 1274-1362; that stretch reads PQVIRKIRVE…GSASTDFCLS (89 aa). A disulfide bridge links C1296 with C1346. In terms of domain architecture, Alpha-type protein kinase spans 1390–1625; that stretch reads KGLADSGCWG…YCELLGLTPL (236 aa). Residues 1628-1705 form a disordered region; it reads PEAAHPQAKA…EEGSKAQGMR (78 aa). The segment covering 1664-1696 has biased composition (polar residues); that stretch reads PQGTRKSAPSSKATPQASEPVTTQLLGQPPTQE.

This sequence belongs to the protein kinase superfamily. Alpha-type protein kinase family. ALPK subfamily.

It is found in the nucleus. The enzyme catalyses L-seryl-[protein] + ATP = O-phospho-L-seryl-[protein] + ADP + H(+). The catalysed reaction is L-threonyl-[protein] + ATP = O-phospho-L-threonyl-[protein] + ADP + H(+). Functionally, involved in cardiomyocyte differentiation. The chain is Alpha-protein kinase 3 from Homo sapiens (Human).